The primary structure comprises 201 residues: Imidazole glycerol phosphate synthase subunit HisH (201 aa).

In terms of domain architecture, Glutamine amidotransferase type-1 spans 1–201; sequence MVFIADYGAG…LKVLANFAEL (201 aa). The active-site Nucleophile is the C79. Catalysis depends on residues H183 and E185.

As to quaternary structure, heterodimer of HisH and HisF.

Its subcellular location is the cytoplasm. The catalysed reaction is 5-[(5-phospho-1-deoxy-D-ribulos-1-ylimino)methylamino]-1-(5-phospho-beta-D-ribosyl)imidazole-4-carboxamide + L-glutamine = D-erythro-1-(imidazol-4-yl)glycerol 3-phosphate + 5-amino-1-(5-phospho-beta-D-ribosyl)imidazole-4-carboxamide + L-glutamate + H(+). It catalyses the reaction L-glutamine + H2O = L-glutamate + NH4(+). It functions in the pathway amino-acid biosynthesis; L-histidine biosynthesis; L-histidine from 5-phospho-alpha-D-ribose 1-diphosphate: step 5/9. IGPS catalyzes the conversion of PRFAR and glutamine to IGP, AICAR and glutamate. The HisH subunit catalyzes the hydrolysis of glutamine to glutamate and ammonia as part of the synthesis of IGP and AICAR. The resulting ammonia molecule is channeled to the active site of HisF. The polypeptide is Imidazole glycerol phosphate synthase subunit HisH (Chlorobium chlorochromatii (strain CaD3)).